We begin with the raw amino-acid sequence, 400 residues long: Phosphoglycerate kinase (400 aa).

Substrate contacts are provided by residues 19–21 (DLN), Arg-38, 61–64 (HLGR), Arg-124, and Arg-161. ATP-binding positions include Lys-211, Gly-299, Glu-330, and 356–359 (GGDS).

It belongs to the phosphoglycerate kinase family. Monomer.

The protein localises to the cytoplasm. The catalysed reaction is (2R)-3-phosphoglycerate + ATP = (2R)-3-phospho-glyceroyl phosphate + ADP. It functions in the pathway carbohydrate degradation; glycolysis; pyruvate from D-glyceraldehyde 3-phosphate: step 2/5. In Parafrankia sp. (strain EAN1pec), this protein is Phosphoglycerate kinase.